Here is a 176-residue protein sequence, read N- to C-terminus: Large ribosomal subunit protein uL22 (176 aa).

The tract at residues 113 to 176 (VVESRPSKDQ…ETSEAKGGSD (64 aa)) is disordered. The segment covering 136–152 (SKAAATAPAKKSSASKA) has biased composition (low complexity). A compositionally biased stretch (basic and acidic residues) spans 159–176 (TKAESKTSETSEAKGGSD).

It belongs to the universal ribosomal protein uL22 family. In terms of assembly, part of the 50S ribosomal subunit.

Its function is as follows. This protein binds specifically to 23S rRNA; its binding is stimulated by other ribosomal proteins, e.g. L4, L17, and L20. It is important during the early stages of 50S assembly. It makes multiple contacts with different domains of the 23S rRNA in the assembled 50S subunit and ribosome. Functionally, the globular domain of the protein is located near the polypeptide exit tunnel on the outside of the subunit, while an extended beta-hairpin is found that lines the wall of the exit tunnel in the center of the 70S ribosome. This Mycobacterium marinum (strain ATCC BAA-535 / M) protein is Large ribosomal subunit protein uL22.